A 172-amino-acid chain; its full sequence is Translocon-associated protein subunit delta (172 aa).

Residues 1-23 form the signal peptide; that stretch reads MAAMASFGALALLLLSGLSCCSE. At 24–143 the chain is on the lumenal side; the sequence is ACLEPQITPS…SVDHRGTWNG (120 aa). A disulfide bridge connects residues Cys25 and Cys56. Lys72 participates in a covalent cross-link: Glycyl lysine isopeptide (Lys-Gly) (interchain with G-Cter in ubiquitin). A helical membrane pass occupies residues 144 to 164; that stretch reads PWVSTEVLAAVIGIVIYYLAF. Over 165-172 the chain is Cytoplasmic; sequence SAKSHIQA.

The protein belongs to the TRAP-delta family. As to quaternary structure, heterotetramer of TRAP-alpha, TRAP-beta, TRAP-delta and TRAP-gamma.

The protein localises to the endoplasmic reticulum membrane. TRAP proteins are part of a complex whose function is to bind calcium to the ER membrane and thereby regulate the retention of ER resident proteins. This is Translocon-associated protein subunit delta (Ssr4) from Mus musculus (Mouse).